The chain runs to 227 residues: tRNA (guanine-N(1)-)-methyltransferase (227 aa).

S-adenosyl-L-methionine-binding positions include Gly-112 and Ile-132–Leu-137.

Belongs to the RNA methyltransferase TrmD family. Homodimer.

It localises to the cytoplasm. The enzyme catalyses guanosine(37) in tRNA + S-adenosyl-L-methionine = N(1)-methylguanosine(37) in tRNA + S-adenosyl-L-homocysteine + H(+). Functionally, specifically methylates guanosine-37 in various tRNAs. The polypeptide is tRNA (guanine-N(1)-)-methyltransferase (Sulfurovum sp. (strain NBC37-1)).